Here is a 172-residue protein sequence, read N- to C-terminus: MSRGLYPGRFQPFHLGHLNVIKWSLERVDELIILVGSSQESHTVTNPFTAGERVEMIRNSLKDVGMDLSRIYIIPMPDILMNNIWAHYVSTYTPKFEVVFARNPLVVRIFKEAGYKVEIPPAFNREKYNSTYIRRLIILNDNWSELVPKPVYKYILEIKGDQRLREIVGTDK.

The protein belongs to the archaeal NMN adenylyltransferase family.

Its subcellular location is the cytoplasm. It carries out the reaction beta-nicotinamide D-ribonucleotide + ATP + H(+) = diphosphate + NAD(+). Its pathway is cofactor biosynthesis; NAD(+) biosynthesis; NAD(+) from nicotinamide D-ribonucleotide: step 1/1. The chain is Nicotinamide-nucleotide adenylyltransferase from Saccharolobus solfataricus (strain ATCC 35092 / DSM 1617 / JCM 11322 / P2) (Sulfolobus solfataricus).